A 149-amino-acid chain; its full sequence is 3-hydroxyacyl-[acyl-carrier-protein] dehydratase FabZ (149 aa).

H49 is an active-site residue.

The protein belongs to the thioester dehydratase family. FabZ subfamily.

It localises to the cytoplasm. The catalysed reaction is a (3R)-hydroxyacyl-[ACP] = a (2E)-enoyl-[ACP] + H2O. In terms of biological role, involved in unsaturated fatty acids biosynthesis. Catalyzes the dehydration of short chain beta-hydroxyacyl-ACPs and long chain saturated and unsaturated beta-hydroxyacyl-ACPs. The sequence is that of 3-hydroxyacyl-[acyl-carrier-protein] dehydratase FabZ from Sulfurovum sp. (strain NBC37-1).